Consider the following 283-residue polypeptide: Bifunctional protein FolD (283 aa).

NADP(+)-binding positions include 165 to 167, serine 190, and valine 231; that span reads GRS.

This sequence belongs to the tetrahydrofolate dehydrogenase/cyclohydrolase family. In terms of assembly, homodimer. Interacts with BrxC.

The enzyme catalyses (6R)-5,10-methylene-5,6,7,8-tetrahydrofolate + NADP(+) = (6R)-5,10-methenyltetrahydrofolate + NADPH. It carries out the reaction (6R)-5,10-methenyltetrahydrofolate + H2O = (6R)-10-formyltetrahydrofolate + H(+). It functions in the pathway one-carbon metabolism; tetrahydrofolate interconversion. Catalyzes the oxidation of 5,10-methylenetetrahydrofolate to 5,10-methenyltetrahydrofolate and then the hydrolysis of 5,10-methenyltetrahydrofolate to 10-formyltetrahydrofolate. This is Bifunctional protein FolD from Bacillus subtilis (strain 168).